The primary structure comprises 220 residues: UPF0758 protein APL_1970 (220 aa).

The region spanning asparagine 98–arginine 220 is the MPN domain. Histidine 169, histidine 171, and aspartate 182 together coordinate Zn(2+). Positions histidine 169–aspartate 182 match the JAMM motif motif.

The protein belongs to the UPF0758 family.

This Actinobacillus pleuropneumoniae serotype 5b (strain L20) protein is UPF0758 protein APL_1970.